A 46-amino-acid chain; its full sequence is MIYRKWSLLSGPPVILGGAVIAAVAVGFVLQNVTKGEQKKNVSTNK.

In terms of assembly, component of complex II composed of eight subunits in plants: four classical SDH subunits SDH1, SDH2, SDH3 and SDH4 (a flavoprotein (FP), an iron-sulfur protein (IP), and a cytochrome b composed of a large and a small subunit.), as well as four subunits unknown in mitochondria from bacteria and heterotrophic eukaryotes.

The protein resides in the mitochondrion inner membrane. It functions in the pathway carbohydrate metabolism; tricarboxylic acid cycle. The chain is Succinate dehydrogenase subunit 8, mitochondrial from Arabidopsis thaliana (Mouse-ear cress).